The sequence spans 245 residues: uncharacterized protein (245 aa).

An N-terminal signal peptide occupies residues 1–18 (MKSAAILALLAQALAVTA). Residues 21–66 (VEGDRTPGTRTLDLPNFPGGSVPTRGVEKRADLPPDNGGGNAPDPD) are disordered. N-linked (GlcNAc...) asparagine glycosylation is found at Asn-189 and Asn-225.

The protein localises to the secreted. This is an uncharacterized protein from Arthroderma benhamiae (strain ATCC MYA-4681 / CBS 112371) (Trichophyton mentagrophytes).